Here is a 660-residue protein sequence, read N- to C-terminus: Bifunctional polymyxin resistance protein ArnA (660 aa).

The formyltransferase ArnAFT stretch occupies residues 1 to 304; that stretch reads MKTVVFAYHD…MLGLVQGSRL (304 aa). 86–88 is a (6R)-10-formyltetrahydrofolate binding site; sequence HLI. The active-site Proton donor; for formyltransferase activity is the His104. (6R)-10-formyltetrahydrofolate is bound by residues Arg114 and 136–140; that span reads VKRAD. A dehydrogenase ArnADH region spans residues 314 to 660; the sequence is RRTRVLILGV…RTVDLTDKPS (347 aa). NAD(+) is bound by residues Asp347 and 368 to 369; that span reads DI. Residues Ala393, Tyr398, and 432–433 each bind UDP-alpha-D-glucuronate; that span reads TS. Residue Glu434 is the Proton acceptor; for decarboxylase activity of the active site. Residues Arg460, Asn492, 526 to 535, and Tyr613 each bind UDP-alpha-D-glucuronate; that span reads KLIDGGKQKR. Arg619 functions as the Proton donor; for decarboxylase activity in the catalytic mechanism.

The protein in the N-terminal section; belongs to the Fmt family. UDP-L-Ara4N formyltransferase subfamily. It in the C-terminal section; belongs to the NAD(P)-dependent epimerase/dehydratase family. UDP-glucuronic acid decarboxylase subfamily. In terms of assembly, homohexamer, formed by a dimer of trimers.

It catalyses the reaction UDP-alpha-D-glucuronate + NAD(+) = UDP-beta-L-threo-pentopyranos-4-ulose + CO2 + NADH. It carries out the reaction UDP-4-amino-4-deoxy-beta-L-arabinose + (6R)-10-formyltetrahydrofolate = UDP-4-deoxy-4-formamido-beta-L-arabinose + (6S)-5,6,7,8-tetrahydrofolate + H(+). Its pathway is nucleotide-sugar biosynthesis; UDP-4-deoxy-4-formamido-beta-L-arabinose biosynthesis; UDP-4-deoxy-4-formamido-beta-L-arabinose from UDP-alpha-D-glucuronate: step 1/3. It functions in the pathway nucleotide-sugar biosynthesis; UDP-4-deoxy-4-formamido-beta-L-arabinose biosynthesis; UDP-4-deoxy-4-formamido-beta-L-arabinose from UDP-alpha-D-glucuronate: step 3/3. The protein operates within bacterial outer membrane biogenesis; lipopolysaccharide biosynthesis. In terms of biological role, bifunctional enzyme that catalyzes the oxidative decarboxylation of UDP-glucuronic acid (UDP-GlcUA) to UDP-4-keto-arabinose (UDP-Ara4O) and the addition of a formyl group to UDP-4-amino-4-deoxy-L-arabinose (UDP-L-Ara4N) to form UDP-L-4-formamido-arabinose (UDP-L-Ara4FN). The modified arabinose is attached to lipid A and is required for resistance to polymyxin and cationic antimicrobial peptides. This chain is Bifunctional polymyxin resistance protein ArnA, found in Shigella sonnei (strain Ss046).